The chain runs to 574 residues: Amino-acid acetyltransferase, mitochondrial (574 aa).

A mitochondrion-targeting transit peptide spans 1 to 13 (MWRRIFAHGLKYD). Positions 392 to 560 (KGAKPSNNSP…KRLREFMRSV (169 aa)) constitute an N-acetyltransferase domain.

The protein belongs to the acetyltransferase family. Interacts with the acetylglutamate kinase chain of AGR5,6.

The protein resides in the mitochondrion. The enzyme catalyses L-glutamate + acetyl-CoA = N-acetyl-L-glutamate + CoA + H(+). It participates in amino-acid biosynthesis; L-arginine biosynthesis; N(2)-acetyl-L-ornithine from L-glutamate: step 1/4. Its activity is regulated as follows. Feedback inhibition by L-arginine. Functionally, N-acetylglutamate synthase involved in arginine biosynthesis. This chain is Amino-acid acetyltransferase, mitochondrial (ARG2), found in Saccharomyces cerevisiae (strain YJM789) (Baker's yeast).